Reading from the N-terminus, the 317-residue chain is Transaldolase (317 aa).

Catalysis depends on Lys-132, which acts as the Schiff-base intermediate with substrate.

The protein belongs to the transaldolase family. Type 1 subfamily. Homodimer.

It is found in the cytoplasm. It catalyses the reaction D-sedoheptulose 7-phosphate + D-glyceraldehyde 3-phosphate = D-erythrose 4-phosphate + beta-D-fructose 6-phosphate. The protein operates within carbohydrate degradation; pentose phosphate pathway; D-glyceraldehyde 3-phosphate and beta-D-fructose 6-phosphate from D-ribose 5-phosphate and D-xylulose 5-phosphate (non-oxidative stage): step 2/3. In terms of biological role, transaldolase is important for the balance of metabolites in the pentose-phosphate pathway. This Histophilus somni (strain 2336) (Haemophilus somnus) protein is Transaldolase.